An 895-amino-acid polypeptide reads, in one-letter code: Isoleucine--tRNA ligase (895 aa).

Residues Pro57–His67 carry the 'HIGH' region motif. Glu549 serves as a coordination point for L-isoleucyl-5'-AMP. The 'KMSKS' region signature appears at Lys590 to Ser594. Lys593 is a binding site for ATP. Zn(2+) contacts are provided by Cys869, Cys872, Cys888, and Cys891.

This sequence belongs to the class-I aminoacyl-tRNA synthetase family. IleS type 1 subfamily. As to quaternary structure, monomer. The cofactor is Zn(2+).

It is found in the cytoplasm. It carries out the reaction tRNA(Ile) + L-isoleucine + ATP = L-isoleucyl-tRNA(Ile) + AMP + diphosphate. Functionally, catalyzes the attachment of isoleucine to tRNA(Ile). As IleRS can inadvertently accommodate and process structurally similar amino acids such as valine, to avoid such errors it has two additional distinct tRNA(Ile)-dependent editing activities. One activity is designated as 'pretransfer' editing and involves the hydrolysis of activated Val-AMP. The other activity is designated 'posttransfer' editing and involves deacylation of mischarged Val-tRNA(Ile). In Mycoplasma genitalium (strain ATCC 33530 / DSM 19775 / NCTC 10195 / G37) (Mycoplasmoides genitalium), this protein is Isoleucine--tRNA ligase.